A 473-amino-acid polypeptide reads, in one-letter code: Hyaluronidase-2 (473 aa).

Residues 1 to 20 (MRAGPGPTVTLALVLAVSWA) form the signal peptide. 2 disulfide bridges follow: Cys-47/Cys-340 and Cys-211/Cys-227. N-linked (GlcNAc...) asparagine glycans are attached at residues Asn-74 and Asn-103. Glu-135 functions as the Proton donor in the catalytic mechanism. The N-linked (GlcNAc...) asparagine glycan is linked to Asn-357. Residues 361–439 (ATQYCSRAQC…YLGWSGEQCQ (79 aa)) enclose the EGF-like domain. 3 disulfides stabilise this stretch: Cys-365-Cys-376, Cys-370-Cys-427, and Cys-429-Cys-438. Gly-448 carries the GPI-anchor amidated glycine lipid modification. The propeptide at 449 to 473 (ASEAWAGSHLTSLLALAALAFTWTL) is removed in mature form.

Belongs to the glycosyl hydrolase 56 family. As to quaternary structure, interacts with MST1R. As to expression, widely expressed (at protein level).

The protein localises to the cell membrane. The enzyme catalyses Random hydrolysis of (1-&gt;4)-linkages between N-acetyl-beta-D-glucosamine and D-glucuronate residues in hyaluronate.. In terms of biological role, catalyzes hyaluronan degradation into small fragments that are endocytosed and degraded in lysosomes by HYAL1 and exoglycosidases. Essential for the breakdown of extracellular matrix hyaluronan. In Homo sapiens (Human), this protein is Hyaluronidase-2 (HYAL2).